An 80-amino-acid chain; its full sequence is uncharacterized protein (80 aa).

The next 3 membrane-spanning stretches (helical) occupy residues 2-22 (INLW…IGQV), 32-52 (FFGM…LTGG), and 55-75 (LVTG…RFMV).

It is found in the cell membrane. This is an uncharacterized protein from Escherichia coli (strain K12).